A 209-amino-acid polypeptide reads, in one-letter code: Ribosomal RNA large subunit methyltransferase E (209 aa).

Gly63, Trp65, Asp83, Asp99, and Asp124 together coordinate S-adenosyl-L-methionine. Lys164 (proton acceptor) is an active-site residue.

It belongs to the class I-like SAM-binding methyltransferase superfamily. RNA methyltransferase RlmE family.

The protein resides in the cytoplasm. The enzyme catalyses uridine(2552) in 23S rRNA + S-adenosyl-L-methionine = 2'-O-methyluridine(2552) in 23S rRNA + S-adenosyl-L-homocysteine + H(+). Specifically methylates the uridine in position 2552 of 23S rRNA at the 2'-O position of the ribose in the fully assembled 50S ribosomal subunit. The sequence is that of Ribosomal RNA large subunit methyltransferase E from Shewanella piezotolerans (strain WP3 / JCM 13877).